We begin with the raw amino-acid sequence, 356 residues long: Anthranilate phosphoribosyltransferase (356 aa).

5-phospho-alpha-D-ribose 1-diphosphate-binding positions include glycine 96, 99–100, threonine 104, 106–109, 124–132, and serine 136; these read GD, NIST, and KHGNRSASG. Glycine 96 contributes to the anthranilate binding site. Serine 108 provides a ligand contact to Mg(2+). Residue asparagine 127 participates in anthranilate binding. An anthranilate-binding site is contributed by arginine 182. The Mg(2+) site is built by aspartate 241 and glutamate 242.

It belongs to the anthranilate phosphoribosyltransferase family. Homodimer. Requires Mg(2+) as cofactor.

It carries out the reaction N-(5-phospho-beta-D-ribosyl)anthranilate + diphosphate = 5-phospho-alpha-D-ribose 1-diphosphate + anthranilate. Its pathway is amino-acid biosynthesis; L-tryptophan biosynthesis; L-tryptophan from chorismate: step 2/5. In terms of biological role, catalyzes the transfer of the phosphoribosyl group of 5-phosphorylribose-1-pyrophosphate (PRPP) to anthranilate to yield N-(5'-phosphoribosyl)-anthranilate (PRA). This is Anthranilate phosphoribosyltransferase from Trichodesmium erythraeum (strain IMS101).